Consider the following 43-residue polypeptide: SPbeta prophage-derived uncharacterized protein YotD (43 aa).

The sequence is that of SPbeta prophage-derived uncharacterized protein YotD (yotD) from Bacillus subtilis (strain 168).